A 733-amino-acid polypeptide reads, in one-letter code: Polyribonucleotide nucleotidyltransferase (733 aa).

Mg(2+)-binding residues include D488 and D494. In terms of domain architecture, KH spans 555 to 614 (PRIEVMNIAVDKIRDVIGTGGKVIREIVEQTGAKINIEDDGTIRIASADAKTIEAAKRWI). The S1 motif domain maps to 624–692 (GVIYQGTVVK…ERGKVRLSMK (69 aa)). Residues 711–722 (EQEKYTEETHKS) show a composition bias toward basic and acidic residues. A disordered region spans residues 711–733 (EQEKYTEETHKSENKRRRKKKEE). Residues 723–733 (ENKRRRKKKEE) show a composition bias toward basic residues.

Belongs to the polyribonucleotide nucleotidyltransferase family. It depends on Mg(2+) as a cofactor.

It localises to the cytoplasm. The enzyme catalyses RNA(n+1) + phosphate = RNA(n) + a ribonucleoside 5'-diphosphate. Involved in mRNA degradation. Catalyzes the phosphorolysis of single-stranded polyribonucleotides processively in the 3'- to 5'-direction. In Bartonella henselae (strain ATCC 49882 / DSM 28221 / CCUG 30454 / Houston 1) (Rochalimaea henselae), this protein is Polyribonucleotide nucleotidyltransferase.